Reading from the N-terminus, the 292-residue chain is MPWLQVRLAISPEQAETYEDALLEVGAVSVTFMDAEDQPIFEPELNTTPLWTHTHLLALFEADTNAELALAHLSLLTGAELPEHSAEVIEDQDWERSWMDNFQPMCFGQRLWIVPSWHAAPQPDAVNLLLDPGLAFGTGTHPTTALCLEWLDGQDLKGCNVLDFGCGSGILAIAALLLGAEQAVGTDIDVQALEASRDNAGRNNIAAERFPLYLPEDLPPQQADVLVANILAGPLVSLAPQLTTLIKTGGRLALSGILAEQGEDVAAAYAESFDLDPIANRDGWVRITGRRR.

Residues threonine 144, glycine 165, aspartate 187, and asparagine 229 each contribute to the S-adenosyl-L-methionine site.

Belongs to the methyltransferase superfamily. PrmA family.

The protein localises to the cytoplasm. The catalysed reaction is L-lysyl-[protein] + 3 S-adenosyl-L-methionine = N(6),N(6),N(6)-trimethyl-L-lysyl-[protein] + 3 S-adenosyl-L-homocysteine + 3 H(+). Functionally, methylates ribosomal protein L11. The protein is Ribosomal protein L11 methyltransferase of Pseudomonas syringae pv. tomato (strain ATCC BAA-871 / DC3000).